We begin with the raw amino-acid sequence, 382 residues long: S-adenosylmethionine synthase (382 aa).

H16 provides a ligand contact to ATP. D18 contributes to the Mg(2+) binding site. E44 lines the K(+) pocket. Residues E57 and Q100 each coordinate L-methionine. Residues 100 to 110 are flexible loop; the sequence is QSPDIAQGVDN. ATP-binding positions include 165 to 167, 231 to 232, D240, 246 to 247, and K267; these read DAK, RF, and RK. D240 provides a ligand contact to L-methionine. K271 lines the L-methionine pocket.

Belongs to the AdoMet synthase family. As to quaternary structure, homotetramer; dimer of dimers. Requires Mg(2+) as cofactor. The cofactor is K(+).

The protein resides in the cytoplasm. It catalyses the reaction L-methionine + ATP + H2O = S-adenosyl-L-methionine + phosphate + diphosphate. It functions in the pathway amino-acid biosynthesis; S-adenosyl-L-methionine biosynthesis; S-adenosyl-L-methionine from L-methionine: step 1/1. Catalyzes the formation of S-adenosylmethionine (AdoMet) from methionine and ATP. The overall synthetic reaction is composed of two sequential steps, AdoMet formation and the subsequent tripolyphosphate hydrolysis which occurs prior to release of AdoMet from the enzyme. The protein is S-adenosylmethionine synthase of Legionella pneumophila (strain Paris).